We begin with the raw amino-acid sequence, 109 residues long: Large ribosomal subunit protein P2 (109 aa).

Positions 63–109 (ASVPSGGAGGASGGAAAAGGAAEEAKEEEKEEEKEESDEDMGFGLFD) are disordered. Residues 68 to 79 (GGAGGASGGAAA) are compositionally biased toward gly residues. The segment covering 91–103 (EKEEEKEESDEDM) has biased composition (acidic residues). Serine 99 carries the phosphoserine modification.

This sequence belongs to the eukaryotic ribosomal protein P1/P2 family. P1 and P2 exist as dimers at the large ribosomal subunit.

Its function is as follows. Plays an important role in the elongation step of protein synthesis. In Fusarium culmorum, this protein is Large ribosomal subunit protein P2.